The following is a 318-amino-acid chain: NADH-ubiquinone oxidoreductase chain 1 (318 aa).

8 helical membrane passes run 2-22 (FMINIACLIIPILLAVAFLTL), 69-89 (LLFTVAPTLALTLALTMWLPL), 100-120 (LGVLFILAISSLAVYSILWSG), 146-166 (LAIILLSVLLMSGSFTLTNLI), 171-191 (HMWLIIPTWPLAMMWFISTLA), 231-251 (IMMMNALTTLLFLGALHTPLV), 253-273 (GIYTANFVLKTLILTIMFLWI), and 285-305 (LMHLLWKNFLPLTLAMLMWHV).

This sequence belongs to the complex I subunit 1 family. As to quaternary structure, core subunit of respiratory chain NADH dehydrogenase (Complex I) which is composed of 45 different subunits.

The protein resides in the mitochondrion inner membrane. It catalyses the reaction a ubiquinone + NADH + 5 H(+)(in) = a ubiquinol + NAD(+) + 4 H(+)(out). Core subunit of the mitochondrial membrane respiratory chain NADH dehydrogenase (Complex I) which catalyzes electron transfer from NADH through the respiratory chain, using ubiquinone as an electron acceptor. Essential for the catalytic activity and assembly of complex I. The sequence is that of NADH-ubiquinone oxidoreductase chain 1 (MT-ND1) from Myrmecophaga tridactyla (Giant anteater).